Reading from the N-terminus, the 178-residue chain is Dual-action ribosomal maturation protein DarP (178 aa).

This sequence belongs to the DarP family.

The protein resides in the cytoplasm. Its function is as follows. Member of a network of 50S ribosomal subunit biogenesis factors which assembles along the 30S-50S interface, preventing incorrect 23S rRNA structures from forming. Promotes peptidyl transferase center (PTC) maturation. This Haemophilus influenzae (strain PittEE) protein is Dual-action ribosomal maturation protein DarP.